We begin with the raw amino-acid sequence, 100 residues long: Sec-independent protein translocase protein TatA (100 aa).

Residues 1–21 traverse the membrane as a helical segment; that stretch reads MGALRPWHIAVLVVVLILLFG. The segment covering 46–58 has biased composition (basic and acidic residues); the sequence is LHDDDRDLAEKAD. Residues 46 to 100 form a disordered region; that stretch reads LHDDDRDLAEKADAQAGYQPMPPQVQQGQHPQQSPYPAPPQQQPVVDPVQRTRDS. The segment covering 69-78 has biased composition (low complexity); sequence QVQQGQHPQQ.

The protein belongs to the TatA/E family. As to quaternary structure, the Tat system comprises two distinct complexes: a TatABC complex, containing multiple copies of TatA, TatB and TatC subunits, and a separate TatA complex, containing only TatA subunits. Substrates initially bind to the TatABC complex, which probably triggers association of the separate TatA complex to form the active translocon.

It is found in the cell membrane. Functionally, part of the twin-arginine translocation (Tat) system that transports large folded proteins containing a characteristic twin-arginine motif in their signal peptide across membranes. TatA could form the protein-conducting channel of the Tat system. The protein is Sec-independent protein translocase protein TatA of Salinispora tropica (strain ATCC BAA-916 / DSM 44818 / JCM 13857 / NBRC 105044 / CNB-440).